Consider the following 141-residue polypeptide: Phosphoribosyl-AMP cyclohydrolase (141 aa).

Position 91 (Asp-91) interacts with Mg(2+). Cys-92 provides a ligand contact to Zn(2+). Positions 93 and 95 each coordinate Mg(2+). Zn(2+)-binding residues include Cys-110 and Cys-117.

It belongs to the PRA-CH family. Homodimer. It depends on Mg(2+) as a cofactor. Zn(2+) is required as a cofactor.

The protein resides in the cytoplasm. The catalysed reaction is 1-(5-phospho-beta-D-ribosyl)-5'-AMP + H2O = 1-(5-phospho-beta-D-ribosyl)-5-[(5-phospho-beta-D-ribosylamino)methylideneamino]imidazole-4-carboxamide. The protein operates within amino-acid biosynthesis; L-histidine biosynthesis; L-histidine from 5-phospho-alpha-D-ribose 1-diphosphate: step 3/9. Its function is as follows. Catalyzes the hydrolysis of the adenine ring of phosphoribosyl-AMP. This is Phosphoribosyl-AMP cyclohydrolase from Brucella anthropi (strain ATCC 49188 / DSM 6882 / CCUG 24695 / JCM 21032 / LMG 3331 / NBRC 15819 / NCTC 12168 / Alc 37) (Ochrobactrum anthropi).